A 97-amino-acid polypeptide reads, in one-letter code: Large ribosomal subunit protein uL23 (97 aa).

The protein belongs to the universal ribosomal protein uL23 family. As to quaternary structure, part of the 50S ribosomal subunit. Contacts protein L29, and trigger factor when it is bound to the ribosome.

Its function is as follows. One of the early assembly proteins it binds 23S rRNA. One of the proteins that surrounds the polypeptide exit tunnel on the outside of the ribosome. Forms the main docking site for trigger factor binding to the ribosome. The sequence is that of Large ribosomal subunit protein uL23 from Brachyspira hyodysenteriae (strain ATCC 49526 / WA1).